A 913-amino-acid polypeptide reads, in one-letter code: Collagen alpha-2(I) chain (913 aa).

The disordered stretch occupies residues 1–913 (SGGFDFSFLP…FGYEGDFYRA (913 aa)). A 4-hydroxyproline mark is found at P10, P13, P35, and P41. 3 stretches are compositionally biased toward low complexity: residues 28–67 (LMGP…ARGP), 125–154 (VGAP…SAGP), and 199–220 (PGAN…AGAP). Over residues 254 to 263 (GESGGKGEPG) the composition is skewed to gly residues. A compositionally biased stretch (low complexity) spans 264 to 274 (SAGPQGPPGSS). Over residues 281 to 303 (GPNGGSTGPTGPPGLRGGPGSRG) the composition is skewed to gly residues. Low complexity predominate over residues 316-332 (PAGARGASGPAGVRGPS). P338 and P341 each carry 4-hydroxyproline. Low complexity-rich tracts occupy residues 367–386 (LPGI…RGEA) and 408–421 (PDGN…PGLQ). The span at 422–431 (GVQGGKGTTG) shows a compositional bias: gly residues. Low complexity-rich tracts occupy residues 459-476 (PGES…SRGP) and 488-498 (EPGVVGAPGTA). Over residues 499 to 517 (GPAGSGGPGERGAAGIPGG) the composition is skewed to gly residues. 2 stretches are compositionally biased toward low complexity: residues 527 to 574 (RGEV…PRGS) and 581 to 601 (VGPA…QPGA). Positions 602-611 (KGERGTKGPK) are enriched in basic and acidic residues. Over residues 619-629 (PTGPVGSAGPA) the composition is skewed to low complexity. A compositionally biased stretch (gly residues) spans 639–648 (GSRGDGGPPG). A compositionally biased stretch (low complexity) spans 650-659 (TGFPGAAGRT). Residues 696–705 (GETGAGGPPG) are compositionally biased toward gly residues. Low complexity-rich tracts occupy residues 713 to 740 (SGEP…LGLP) and 748 to 758 (LPGVAGAVGEP). Residues 759 to 776 (GPLGIGPPGARGPSGAGK) show a composition bias toward gly residues. Low complexity predominate over residues 782–797 (EPGPVGSVGPVGALGP). Residues 807–818 (RGDKGEPGEKGP) are compositionally biased toward basic and acidic residues. Residues 883–895 (SGPPGPPGPPGPP) show a composition bias toward pro residues.

Belongs to the fibrillar collagen family. In terms of assembly, trimers of one alpha 2(I) and two alpha 1(I) chains. Interacts (via C-terminus) with TMEM131 (via PapD-L domain); the interaction is direct and is involved in assembly and TRAPPIII ER-to-Golgi transport complex-dependent secretion of collagen. Prolines at the third position of the tripeptide repeating unit (G-X-Y) are hydroxylated in some or all of the chains. In terms of tissue distribution, expressed in bones.

The protein resides in the secreted. The protein localises to the extracellular space. It localises to the extracellular matrix. Functionally, type I collagen is a member of group I collagen (fibrillar forming collagen). The chain is Collagen alpha-2(I) chain from Parocnus serus (Greater Haitian ground sloth).